Here is a 332-residue protein sequence, read N- to C-terminus: Invasin IpaD (332 aa).

Low complexity predominate over residues 1-25; that stretch reads MNITTLTNSISTSSFSPNNTNGSST. Residues 1–43 are disordered; that stretch reads MNITTLTNSISTSSFSPNNTNGSSTETVNSDIKTTTSSHPVSS. Over residues 26–43 the composition is skewed to polar residues; the sequence is ETVNSDIKTTTSSHPVSS. A coiled-coil region spans residues 44-77; the sequence is LTMLNDTLHNIRTTNQALKKELSQKTLTKTSLEE. An ipaB binding region spans residues 192 to 267; sequence VNSLKKALEE…KSLDNLGGNG (76 aa).

This sequence belongs to the invasin protein D family.

It is found in the secreted. Its function is as follows. Required for bacterial invasion of host cells. Controls IpaB and IpaC secretion, and the efficiency with which they are physically inserted into target cell membranes. These proteins are exported via T3SS to form a pore in the host membrane that allows the translocation of the other effectors into the host cytoplasm. Along with IpaB, is essential for both blocking secretion through the Mxi/Spa translocon in the absence of a secretion-inducing signal, and for controlling the level of secretion in the presence of this signal. The sequence is that of Invasin IpaD (ipaD) from Shigella flexneri.